A 147-amino-acid polypeptide reads, in one-letter code: Hemoglobin subunit gamma-2 (147 aa).

Residues 3-147 (HFTEEDKATI…VASALSSRYH (145 aa)) form the Globin domain. A Phosphothreonine modification is found at Thr13. Ser45, Ser51, and Ser53 each carry phosphoserine. Residue Lys60 is modified to N6-acetyllysine. His64 contributes to the heme b binding site. Position 83 is an N6-acetyllysine (Lys83). His93 is a heme b binding site. An S-nitrosocysteine modification is found at Cys94. Residues Ser140, Ser143, and Ser144 each carry the phosphoserine modification.

Belongs to the globin family. As to quaternary structure, heterotetramer of two alpha chains and two gamma chains in fetal hemoglobin (Hb F). Red blood cells.

In terms of biological role, gamma chains make up the fetal hemoglobin F, in combination with alpha chains. This chain is Hemoglobin subunit gamma-2 (HBG2), found in Gorilla gorilla gorilla (Western lowland gorilla).